A 642-amino-acid chain; its full sequence is Wall-associated receptor kinase-like 6 (642 aa).

The first 28 residues, 1–28 (MKKTKTYQVFCIAALSVLTLQLINGSSA), serve as a signal peptide directing secretion. Over 29-357 (ATPPPPNSNS…PKITKPEKAS (329 aa)) the chain is Extracellular. N-linked (GlcNAc...) asparagine glycosylation is found at Asn-37, Asn-72, Asn-95, Asn-137, Asn-216, Asn-240, and Asn-276. Positions 289 to 346 (CSCEYDYFSGMSYRICYCNYGYTGNPYLRHGCIDIDECEGHHNCGEGTCVNMPGTHSC) are atypical EGF-like. 3 disulfides stabilise this stretch: Cys-291–Cys-304, Cys-326–Cys-337, and Cys-332–Cys-346. The chain crosses the membrane as a helical span at residues 358 to 378 (VLQGVLISLGVLLFVLGILGL). Topologically, residues 379–642 (YKFIKKRTRI…KPLSRKRIGN (264 aa)) are cytoplasmic. Positions 432–642 (FSMNRVLGQG…KPLSRKRIGN (211 aa)) constitute a Protein kinase domain. Residues 438–446 (LGQGGQGTV) and Lys-460 contribute to the ATP site. Tyr-505 carries the phosphotyrosine modification. The active-site Proton acceptor is Asp-559. Phosphothreonine is present on residues Thr-593 and Thr-598. At Tyr-606 the chain carries Phosphotyrosine.

This sequence belongs to the protein kinase superfamily. Ser/Thr protein kinase family. Slightly expressed in the whole plant.

Its subcellular location is the membrane. It catalyses the reaction L-seryl-[protein] + ATP = O-phospho-L-seryl-[protein] + ADP + H(+). It carries out the reaction L-threonyl-[protein] + ATP = O-phospho-L-threonyl-[protein] + ADP + H(+). Functionally, serine/threonine-protein kinase that may function as a signaling receptor of extracellular matrix component. This is Wall-associated receptor kinase-like 6 (WAKL6) from Arabidopsis thaliana (Mouse-ear cress).